Consider the following 559-residue polypeptide: Potassium-transporting ATPase potassium-binding subunit (559 aa).

Helical transmembrane passes span 5–25, 63–83, 131–151, 173–193, 254–274, 282–302, 327–347, 356–376, 379–399, 416–436, 483–503, and 525–545; these read GFLL…PLGT, LLAI…LLML, VGLT…VFAL, ITLW…IQQG, VQML…GEVV, AILW…MWAE, FGIL…CGAV, ALGG…FGGV, GLYG…LMVG, MIAL…ALAM, LLLA…VMAI, and ALFI…TFIP.

This sequence belongs to the KdpA family. In terms of assembly, the system is composed of three essential subunits: KdpA, KdpB and KdpC.

Its subcellular location is the cell inner membrane. Functionally, part of the high-affinity ATP-driven potassium transport (or Kdp) system, which catalyzes the hydrolysis of ATP coupled with the electrogenic transport of potassium into the cytoplasm. This subunit binds the periplasmic potassium ions and delivers the ions to the membrane domain of KdpB through an intramembrane tunnel. This chain is Potassium-transporting ATPase potassium-binding subunit, found in Klebsiella pneumoniae (strain 342).